A 277-amino-acid chain; its full sequence is Prohibitin-3, mitochondrial (277 aa).

G2 carries the post-translational modification N-acetylglycine. Over 2-6 (GSQQA) the chain is Mitochondrial matrix. A helical; Signal-anchor for type II membrane protein transmembrane segment spans residues 7–28 (AVSFLSNLAKAAFGLGTAATVL). The Mitochondrial intermembrane portion of the chain corresponds to 29-277 (NTSLFTVDGG…GQSMLFALNR (249 aa)).

The protein belongs to the prohibitin family. As to quaternary structure, component of a prohibitin multimeric complex in mitochondrial membranes. As to expression, mostly expressed in proliferative tissues, including vasculature, shoot and root apical tissues. Expressed in roots, stems, leaves and flowers (at protein level).

The protein localises to the cell membrane. It localises to the mitochondrion inner membrane. Its subcellular location is the nucleus. It is found in the cytoplasm. In terms of biological role, prohibitin probably acts as a holdase/unfoldase for the stabilization of newly synthesized mitochondrial proteins. Necessary for mitochondrial and cell metabolism and biogenesis. Required to regulate the ethylene-mediated signaling; involved in growth maintenance in the presence of ethylene. Functions in nitric oxide (NO)-mediated responses and in hydrogen peroxide-induced NO accumulation. The polypeptide is Prohibitin-3, mitochondrial (PHB3) (Arabidopsis thaliana (Mouse-ear cress)).